Here is a 276-residue protein sequence, read N- to C-terminus: NAD-capped RNA hydrolase NudC (276 aa).

Position 82 (R82) interacts with substrate. Residues C112 and C115 each contribute to the Zn(2+) site. E125 contributes to the substrate binding site. Zn(2+)-binding residues include C130 and C133. A substrate-binding site is contributed by Y138. The 124-residue stretch at 139 to 262 (PRLSPSMIVL…SIARYLIELY (124 aa)) folds into the Nudix hydrolase domain. Positions 172, 188, and 192 each coordinate a divalent metal cation. The short motif at 173–194 (GYVEPGESVEQCVAREVREEVG) is the Nudix box element. 206–213 (QGWPFPHS) lines the substrate pocket. An a divalent metal cation-binding site is contributed by E233. A255 provides a ligand contact to substrate.

Belongs to the Nudix hydrolase family. NudC subfamily. As to quaternary structure, homodimer. It depends on Mg(2+) as a cofactor. The cofactor is Mn(2+). Zn(2+) serves as cofactor.

It catalyses the reaction a 5'-end NAD(+)-phospho-ribonucleoside in mRNA + H2O = a 5'-end phospho-adenosine-phospho-ribonucleoside in mRNA + beta-nicotinamide D-ribonucleotide + 2 H(+). The enzyme catalyses NAD(+) + H2O = beta-nicotinamide D-ribonucleotide + AMP + 2 H(+). The catalysed reaction is NADH + H2O = reduced beta-nicotinamide D-ribonucleotide + AMP + 2 H(+). MRNA decapping enzyme that specifically removes the nicotinamide adenine dinucleotide (NAD) cap from a subset of mRNAs by hydrolyzing the diphosphate linkage to produce nicotinamide mononucleotide (NMN) and 5' monophosphate mRNA. The NAD-cap is present at the 5'-end of some mRNAs and stabilizes RNA against 5'-processing. Has preference for mRNAs with a 5'-end purine. Catalyzes the hydrolysis of a broad range of dinucleotide pyrophosphates. The protein is NAD-capped RNA hydrolase NudC of Stutzerimonas stutzeri (strain A1501) (Pseudomonas stutzeri).